Here is a 579-residue protein sequence, read N- to C-terminus: Tyrosine 3-monooxygenase (579 aa).

Acidic residues predominate over residues 105-114 (VEFESVEQEQ). A disordered region spans residues 105 to 132 (VEFESVEQEQSESQSQEPEGNQQPTKND). Residues His409, His414, and Glu454 each contribute to the Fe cation site.

The protein belongs to the biopterin-dependent aromatic amino acid hydroxylase family. Fe(2+) serves as cofactor.

Its subcellular location is the cytoplasm. The protein resides in the perinuclear region. It is found in the cell projection. The protein localises to the axon. It carries out the reaction (6R)-L-erythro-5,6,7,8-tetrahydrobiopterin + L-tyrosine + O2 = (4aS,6R)-4a-hydroxy-L-erythro-5,6,7,8-tetrahydrobiopterin + L-dopa. It functions in the pathway catecholamine biosynthesis; dopamine biosynthesis; dopamine from L-tyrosine: step 1/2. With respect to regulation, phosphorylation leads to an increase in the catalytic activity. Its function is as follows. Plays an important role in the physiology of adrenergic neurons. The polypeptide is Tyrosine 3-monooxygenase (ple) (Drosophila melanogaster (Fruit fly)).